A 264-amino-acid polypeptide reads, in one-letter code: Glyceraldehyde-3-phosphate dehydrogenase (264 aa).

Residues arginine 45 and threonine 93 each coordinate NAD(+). D-glyceraldehyde 3-phosphate contacts are provided by residues serine 123 to threonine 125 and threonine 154. The Nucleophile role is filled by cysteine 124. Residue asparagine 155 participates in NAD(+) binding. D-glyceraldehyde 3-phosphate-binding positions include arginine 169, threonine 182–glycine 183, and arginine 205. The segment at glycine 245–histidine 264 is disordered.

Belongs to the glyceraldehyde-3-phosphate dehydrogenase family. Homotetramer.

Its subcellular location is the cytoplasm. The enzyme catalyses D-glyceraldehyde 3-phosphate + phosphate + NAD(+) = (2R)-3-phospho-glyceroyl phosphate + NADH + H(+). The protein operates within carbohydrate degradation; glycolysis; pyruvate from D-glyceraldehyde 3-phosphate: step 1/5. Its function is as follows. Catalyzes the oxidative phosphorylation of glyceraldehyde 3-phosphate (G3P) to 1,3-bisphosphoglycerate (BPG) using the cofactor NAD. The first reaction step involves the formation of a hemiacetal intermediate between G3P and a cysteine residue, and this hemiacetal intermediate is then oxidized to a thioester, with concomitant reduction of NAD to NADH. The reduced NADH is then exchanged with the second NAD, and the thioester is attacked by a nucleophilic inorganic phosphate to produce BPG. The polypeptide is Glyceraldehyde-3-phosphate dehydrogenase (gap) (Borrelia hermsii).